Reading from the N-terminus, the 121-residue chain is Large ribosomal subunit protein uL24 (121 aa).

Belongs to the universal ribosomal protein uL24 family. In terms of assembly, part of the 50S ribosomal subunit.

Its function is as follows. One of two assembly initiator proteins, it binds directly to the 5'-end of the 23S rRNA, where it nucleates assembly of the 50S subunit. Located at the polypeptide exit tunnel on the outside of the subunit. This Pyrococcus horikoshii (strain ATCC 700860 / DSM 12428 / JCM 9974 / NBRC 100139 / OT-3) protein is Large ribosomal subunit protein uL24.